The sequence spans 155 residues: MSKKGSYKSVGGDFRYGDESVSRFINAVMLDGKKDVAAKIVYDAFDIIAEKMTGENPLEVYRKAMSNIAPVVEVRSKRVGGATYQIPMEVKSSRRGALAFRWLKLYAAKRGGRSMAEKFAAELMDAANEQGASVKKRDEVHRMADANKAFAHFRF.

This sequence belongs to the universal ribosomal protein uS7 family. In terms of assembly, part of the 30S ribosomal subunit. Contacts proteins S9 and S11.

Functionally, one of the primary rRNA binding proteins, it binds directly to 16S rRNA where it nucleates assembly of the head domain of the 30S subunit. Is located at the subunit interface close to the decoding center, probably blocks exit of the E-site tRNA. The sequence is that of Small ribosomal subunit protein uS7 from Chlorobium limicola (strain DSM 245 / NBRC 103803 / 6330).